We begin with the raw amino-acid sequence, 76 residues long: Small ribosomal subunit protein uS17 (76 aa).

Belongs to the universal ribosomal protein uS17 family. In terms of assembly, part of the 30S ribosomal subunit.

Its function is as follows. One of the primary rRNA binding proteins, it binds specifically to the 5'-end of 16S ribosomal RNA. The protein is Small ribosomal subunit protein uS17 of Anaplasma phagocytophilum (strain HZ).